The sequence spans 921 residues: MVNDNKTYFQRSLRIERIPIDFKYKIWNLLLIAKAKLNTTHDGELNTTNFDELNQMIDSRINNPSYSEEIKESLNFIKDIKNQCNLLPSVNFLTPNKNYDDLIEKFKVILLNLRFKEDDIKNFNYNGQHYLNDQHIKLNRKGIEYYKNKDYGNALKCYNQIEKSPFKSLSFHLISKNSLNLAILYSKLNNGPKAIESSLKSCIYNPLNNRAYFYYGRYILESNKQKALDHLYTAFIMESKTKEKQYYEHEYFSLKDTTISGFKKVEESLKMETRQNLLNMYHFIGPSNNQISQTVEQYMDQVANQTQTEKAHNYNDWVTKINDKIKLTKQTIKMTKRKFLSIDELISNPFDINEIQFDALQSNGMNGIVKSGTIGSMKVVVKFPNSYFNGIISTATINSTGSSEWSFGSSDNGGNNSNSNGNSDSNSNNDSNNNNNNNNNNNNNNNNNNNNNNNNNNNNNNNNNNNNNNNNNNNNNNNNNNNSNNNNNSDGSSGDDNRNSDNLIKSDLIDECFLNETVSHLLINEFQINNTPSIVGIGINMIVMEKVDGTELEKYDKTKLTKKIFMDLVIYLMEMNIFEIQHRDLHAANILIKEDGSLSIIDYGYSNIGDDRKGYDISNLKSIYYDFFNNYDTINHDKKEKIKNVFNYLNLNLNSNSNLNLNLNLYSNSNPNSNPNSNPNPKSNLNLNSNSNSNPNPNLNSYSNSHSNSNSNLNSNQKILIDLLNILIEDEEILIPIHSKSYNDERQIEYIFAKRDNDKFLLNDKTFPKIPHCLEMDNKIDLSETPMLKTNIIKKSLKTILPPFIKVCDLEIKGKKELVFWVQDRGNIIIYVPISIESQKFNGCVCPYGQYFHSKLCIFTDKEEYDIPLSFRTKGNIHLDDKPIARFRPLTHVRYICFALKLCDGLKNEYIIEPFEEQFEK.

Residues 334–628 (MTKRKFLSID…NLKSIYYDFF (295 aa)) are kinase-like. A compositionally biased stretch (low complexity) spans 401–494 (GSSEWSFGSS…NNNNSDGSSG (94 aa)). Disordered regions lie at residues 401-499 (GSSE…DNRN) and 664-711 (NLYS…NSNS).

This is an uncharacterized protein from Dictyostelium discoideum (Social amoeba).